A 99-amino-acid chain; its full sequence is Acylphosphatase-1 (99 aa).

Position 2 is an N-acetylalanine (alanine 2). The region spanning 9–99 (SVDYEIFGKV…LDYSDFQIVK (91 aa)) is the Acylphosphatase-like domain. Residues arginine 24 and asparagine 42 contribute to the active site.

The protein belongs to the acylphosphatase family. Organ-common type isozyme is found in many different tissues.

The enzyme catalyses an acyl phosphate + H2O = a carboxylate + phosphate + H(+). The polypeptide is Acylphosphatase-1 (ACYP1) (Homo sapiens (Human)).